Consider the following 23-residue polypeptide: Hemocyanin subunit 4 (23 aa).

The protein belongs to the tyrosinase family. Hemocyanin subfamily. Hemolymph.

Its subcellular location is the secreted. It localises to the extracellular space. Hemocyanins are copper-containing oxygen carriers occurring freely dissolved in the hemolymph of many mollusks and arthropods. The polypeptide is Hemocyanin subunit 4 (Carcinus maenas (Common shore crab)).